We begin with the raw amino-acid sequence, 470 residues long: Uronate isomerase (470 aa).

This sequence belongs to the metallo-dependent hydrolases superfamily. Uronate isomerase family.

The enzyme catalyses D-glucuronate = D-fructuronate. It carries out the reaction aldehydo-D-galacturonate = keto-D-tagaturonate. It functions in the pathway carbohydrate metabolism; pentose and glucuronate interconversion. The chain is Uronate isomerase from Salmonella newport (strain SL254).